Consider the following 311-residue polypeptide: Mitochondrial FAD carrier protein FLX1 (311 aa).

3 Solcar repeats span residues 7–101 (TPLQ…TKEL), 123–210 (MNSL…LKQR), and 224–310 (LTNL…LKHR). The next 6 helical transmembrane spans lie at 13-33 (VISG…LDLL), 77-97 (LSIN…LYGV), 129-149 (LSAG…IWVI), 183-203 (LWKG…YFAV), 230-250 (IEIT…FQLL), and 266-286 (LFPL…YKGL).

It belongs to the mitochondrial carrier (TC 2.A.29) family.

Its subcellular location is the mitochondrion inner membrane. Transport of FAD from the cytosol to the mitochondrial matrix. In Saccharomyces cerevisiae (strain ATCC 204508 / S288c) (Baker's yeast), this protein is Mitochondrial FAD carrier protein FLX1 (FLX1).